A 284-amino-acid polypeptide reads, in one-letter code: Peflin (284 aa).

Residues 1 to 111 (MASYPYRQGC…QPGLYGQGGA (111 aa)) form a disordered region. Positions 8-26 (QGCPGAAGQAPGAPPGSYY) are enriched in low complexity. 9 consecutive repeat copies span residues 21 to 29 (PPGSYYPGP), 31 to 39 (NSGGQYGSG), 41 to 49 (PPGGGYGGP), 50 to 58 (APGGPYGPP), 59 to 67 (AGGGPYGHP), 76 to 84 (TPGGPYGGA), 85 to 92 (APGGPYGQ), 93 to 100 (PPPSSYGA), and 101 to 109 (QQPGLYGQG). Positions 21–109 (PPGSYYPGPP…AQQPGLYGQG (89 aa)) are 9 X 9 AA approximate tandem repeat of [AP]-P-G-G-P-Y-G-G-P-P. The segment covering 34–50 (GQYGSGLPPGGGYGGPA) has biased composition (gly residues). Residues 65–75 (GHPNPGMFPSG) show a composition bias toward low complexity. A compositionally biased stretch (gly residues) spans 76–90 (TPGGPYGGAAPGGPY). EF-hand domains lie at 114-149 (NVDPEAYSWFQSVDSDHSGYISMKELKQALVNCNWS), 155-183 (TCLMMINMFDKTKSGRIDVYGFSALWKFI), 181-216 (KFIQQWKNLFQQYDRDRSGSISYTELQQALSQMGYN), 217-253 (LSPQFTQLLVSRYCPRSANPAMQLDRFIQVCTQLQVL), and 254-283 (TEAFREKDTAVQGNIRLSFEDFVTMTASRM). Ca(2+) contacts are provided by D127, D129, S131, and Y133. K137 is covalently cross-linked (Glycyl lysine isopeptide (Lys-Gly) (interchain with G-Cter in ubiquitin)). E138 contacts Ca(2+). Positions 194, 196, 198, 200, and 205 each coordinate Ca(2+). The required for interaction with PDCD6 stretch occupies residues 204–284 (TELQQALSQM…FVTMTASRML (81 aa)).

In terms of assembly, heterodimer; heterodimerizes (via the EF-hand 5) with PDCD6. Dissociates from PDCD6 in presence of calcium. Ubiquitinated by the BCR(KLHL12) E3 ubiquitin ligase complex.

The protein resides in the cytoplasm. It localises to the endoplasmic reticulum. The protein localises to the membrane. It is found in the cytoplasmic vesicle. Its subcellular location is the COPII-coated vesicle membrane. Functionally, calcium-binding protein that acts as an adapter that bridges unrelated proteins or stabilizes weak protein-protein complexes in response to calcium. Together with PDCD6, acts as a calcium-dependent adapter for the BCR(KLHL12) complex, a complex involved in endoplasmic reticulum (ER)-Golgi transport by regulating the size of COPII coats. In response to cytosolic calcium increase, the heterodimer formed with PDCD6 interacts with, and bridges together the BCR(KLHL12) complex and SEC31 (SEC31A or SEC31B), promoting monoubiquitination of SEC31 and subsequent collagen export, which is required for neural crest specification. Its role in the heterodimer formed with PDCD6 is however unclear: some evidence shows that PEF1 and PDCD6 work together and promote association between PDCD6 and SEC31 in presence of calcium. Other reports show that PEF1 dissociates from PDCD6 in presence of calcium, and may act as a negative regulator of PDCD6. Also acts as a negative regulator of ER-Golgi transport; possibly by inhibiting interaction between PDCD6 and SEC31. This is Peflin from Homo sapiens (Human).